We begin with the raw amino-acid sequence, 54 residues long: Metallothionein-2 (54 aa).

The protein belongs to the metallothionein superfamily. Type 11 family.

The chain is Metallothionein-2 (MTP2) from Yarrowia lipolytica (strain CLIB 122 / E 150) (Yeast).